The chain runs to 90 residues: Keratin-associated protein 19-1 (90 aa).

The tract at residues 5–84 (GSYYGGLGYS…CCRPSYNGGY (80 aa)) is 26 X 2 AA repeats of G-[YCGS].

This sequence belongs to the KRTAP type 19 family. As to quaternary structure, interacts with hair keratins. Detected in the upper portion of the hair cortex.

Functionally, in the hair cortex, hair keratin intermediate filaments are embedded in an interfilamentous matrix, consisting of hair keratin-associated proteins (KRTAP), which are essential for the formation of a rigid and resistant hair shaft through their extensive disulfide bond cross-linking with abundant cysteine residues of hair keratins. The matrix proteins include the high-sulfur and high-glycine-tyrosine keratins. This chain is Keratin-associated protein 19-1 (KRTAP19-1), found in Homo sapiens (Human).